The chain runs to 179 residues: Protein YjaZ (179 aa).

The protein is Protein YjaZ of Escherichia coli (strain K12).